The sequence spans 434 residues: Adenylosuccinate synthetase (434 aa).

GTP contacts are provided by residues 22–28 and 50–52; these read GDEGKGK and GHT. The active-site Proton acceptor is the aspartate 23. Residues aspartate 23 and glycine 50 each contribute to the Mg(2+) site. IMP is bound by residues 23-26, 48-51, threonine 139, arginine 153, glutamine 234, threonine 249, and arginine 313; these read DEGK and NAGH. Histidine 51 serves as the catalytic Proton donor. 309–315 serves as a coordination point for substrate; sequence ATTGRKR. GTP is bound by residues arginine 315, 341–343, and 423–425; these read KLD and SVG.

Belongs to the adenylosuccinate synthetase family. As to quaternary structure, homodimer. It depends on Mg(2+) as a cofactor.

The protein localises to the cytoplasm. The enzyme catalyses IMP + L-aspartate + GTP = N(6)-(1,2-dicarboxyethyl)-AMP + GDP + phosphate + 2 H(+). Its pathway is purine metabolism; AMP biosynthesis via de novo pathway; AMP from IMP: step 1/2. Plays an important role in the de novo pathway of purine nucleotide biosynthesis. Catalyzes the first committed step in the biosynthesis of AMP from IMP. This Chlorobium phaeovibrioides (strain DSM 265 / 1930) (Prosthecochloris vibrioformis (strain DSM 265)) protein is Adenylosuccinate synthetase.